Here is a 614-residue protein sequence, read N- to C-terminus: DNA repair protein rad26 (614 aa).

Over residues 29 to 43 the composition is skewed to low complexity; sequence QAQTQVQAQSSQVVV. 2 disordered regions span residues 29 to 76 and 157 to 214; these read QAQT…QASL and KKMK…TAED. 2 stretches are compositionally biased toward polar residues: residues 50–76 and 181–190; these read QNLN…QASL and LLSSSDQLAK. The span at 191–207 shows a compositional bias: basic residues; sequence STKHAAKNSPSKKKRKT.

Interacts with cds1.

The protein localises to the nucleus. Involved in cell cycle arrest when DNA synthesis is inhibited by hydroxyurea, and in mitosis arrest after treatment with DNA-damaging agents. This protein is S phase-specific. This Schizosaccharomyces pombe (strain 972 / ATCC 24843) (Fission yeast) protein is DNA repair protein rad26 (rad26).